A 414-amino-acid chain; its full sequence is 2,3-diketo-5-methylthiopentyl-1-phosphate enolase (414 aa).

Lys-99 acts as the Proton acceptor in catalysis. Residues Lys-148, 174 to 177 (KDDE), His-265, Gly-338, and 360 to 361 (GG) contribute to the substrate site. Mg(2+) is bound by residues Lys-174, Asp-176, and Glu-177. Lys-174 is subject to N6-carboxylysine.

The protein belongs to the RuBisCO large chain family. Type IV subfamily. In terms of assembly, homodimer. Requires Mg(2+) as cofactor.

The enzyme catalyses 5-methylsulfanyl-2,3-dioxopentyl phosphate = 2-hydroxy-5-methylsulfanyl-3-oxopent-1-enyl phosphate. The protein operates within amino-acid biosynthesis; L-methionine biosynthesis via salvage pathway; L-methionine from S-methyl-5-thio-alpha-D-ribose 1-phosphate: step 3/6. Catalyzes the enolization of 2,3-diketo-5-methylthiopentyl-1-phosphate (DK-MTP-1-P) into 2-hydroxy-3-keto-5-methylthiopentenyl-1-phosphate (HK-MTPenyl-1-P). This chain is 2,3-diketo-5-methylthiopentyl-1-phosphate enolase, found in Bacillus cytotoxicus (strain DSM 22905 / CIP 110041 / 391-98 / NVH 391-98).